The sequence spans 159 residues: Transcription elongation factor GreA (159 aa).

Positions 43 to 76 (LSENAEYDAAREEQSQLEAKIGDLENKLASATIL) form a coiled coil.

Belongs to the GreA/GreB family.

In terms of biological role, necessary for efficient RNA polymerase transcription elongation past template-encoded arresting sites. The arresting sites in DNA have the property of trapping a certain fraction of elongating RNA polymerases that pass through, resulting in locked ternary complexes. Cleavage of the nascent transcript by cleavage factors such as GreA or GreB allows the resumption of elongation from the new 3'terminus. GreA releases sequences of 2 to 3 nucleotides. The protein is Transcription elongation factor GreA of Chlorobaculum parvum (strain DSM 263 / NCIMB 8327) (Chlorobium vibrioforme subsp. thiosulfatophilum).